The sequence spans 91 residues: Large ribosomal subunit protein bL27 (91 aa).

Residues 1 to 24 (MAHKKGVGSSRNGRDSNPKMRGVK) form a disordered region.

The protein belongs to the bacterial ribosomal protein bL27 family.

The sequence is that of Large ribosomal subunit protein bL27 from Chloroflexus aggregans (strain MD-66 / DSM 9485).